The chain runs to 336 residues: Phospho-N-acetylmuramoyl-pentapeptide-transferase (336 aa).

Transmembrane regions (helical) follow at residues Leu3–Ile23, Gly53–Ile73, Ser78–Leu98, Leu118–Ile138, Val143–Val163, Gly174–Ala194, Phe200–Asn220, Val226–Ala246, Trp251–Val271, and Ala316–Phe336.

The protein belongs to the glycosyltransferase 4 family. MraY subfamily. Mg(2+) serves as cofactor.

It is found in the cell membrane. It catalyses the reaction UDP-N-acetyl-alpha-D-muramoyl-L-alanyl-gamma-D-glutamyl-L-lysyl-D-alanyl-D-alanine + di-trans,octa-cis-undecaprenyl phosphate = Mur2Ac(oyl-L-Ala-gamma-D-Glu-L-Lys-D-Ala-D-Ala)-di-trans,octa-cis-undecaprenyl diphosphate + UMP. It functions in the pathway cell wall biogenesis; peptidoglycan biosynthesis. Catalyzes the initial step of the lipid cycle reactions in the biosynthesis of the cell wall peptidoglycan: transfers peptidoglycan precursor phospho-MurNAc-pentapeptide from UDP-MurNAc-pentapeptide onto the lipid carrier undecaprenyl phosphate, yielding undecaprenyl-pyrophosphoryl-MurNAc-pentapeptide, known as lipid I. This Streptococcus pyogenes serotype M49 (strain NZ131) protein is Phospho-N-acetylmuramoyl-pentapeptide-transferase.